The following is a 797-amino-acid chain: Hid-1 family protein P27G11.12 (797 aa).

The protein belongs to the hid-1 family.

The protein resides in the cytoplasm. It localises to the nucleus. This is Hid-1 family protein P27G11.12 from Schizosaccharomyces pombe (strain 972 / ATCC 24843) (Fission yeast).